Reading from the N-terminus, the 251-residue chain is MILYEYPFNERIRTLLRLEDLFERFTFFLTQEDAREHHVALTTLFEISEVAGRADLKSDLMKELERQRQTLAPFRGNPGIEQNALEAVLGEIEQTLSGLSQMQGKTGQHLADNEWLASIRSRAIIPGGTCKFDLPSYYAWQQLHPDQRRQDIAKWVTPLLPLRDAATIVLRLARESGQASKVMAMQGSYQQMLSGRSYQLMQVRVAPELRVIPEASANKYMLWVRFTVQDGDLRPRAVDVDVPFQLTLCSL.

This sequence belongs to the ZapD family. As to quaternary structure, interacts with FtsZ.

The protein localises to the cytoplasm. Functionally, cell division factor that enhances FtsZ-ring assembly. Directly interacts with FtsZ and promotes bundling of FtsZ protofilaments, with a reduction in FtsZ GTPase activity. In Paraburkholderia xenovorans (strain LB400), this protein is Cell division protein ZapD.